The sequence spans 417 residues: Gamma-glutamyl phosphate reductase (417 aa).

This sequence belongs to the gamma-glutamyl phosphate reductase family.

It is found in the cytoplasm. It catalyses the reaction L-glutamate 5-semialdehyde + phosphate + NADP(+) = L-glutamyl 5-phosphate + NADPH + H(+). It functions in the pathway amino-acid biosynthesis; L-proline biosynthesis; L-glutamate 5-semialdehyde from L-glutamate: step 2/2. In terms of biological role, catalyzes the NADPH-dependent reduction of L-glutamate 5-phosphate into L-glutamate 5-semialdehyde and phosphate. The product spontaneously undergoes cyclization to form 1-pyrroline-5-carboxylate. This Klebsiella pneumoniae (strain 342) protein is Gamma-glutamyl phosphate reductase.